The chain runs to 376 residues: Chaperone protein DnaJ (376 aa).

Residues 5–70 enclose the J domain; the sequence is DFYEVLGVGR…DKKAAYDQFG (66 aa). The CR-type zinc finger occupies 132-210; that stretch reads GLSKELRIPT…CHGEGRVEKS (79 aa). Positions 145, 148, 162, 165, 184, 187, 198, and 201 each coordinate Zn(2+). CXXCXGXG motif repeat units follow at residues 145–152, 162–169, 184–191, and 198–205; these read CEPCDGSG, CGTCHGQG, CPTCHGRG, and CNKCHGEG.

Belongs to the DnaJ family. In terms of assembly, homodimer. It depends on Zn(2+) as a cofactor.

Its subcellular location is the cytoplasm. Participates actively in the response to hyperosmotic and heat shock by preventing the aggregation of stress-denatured proteins and by disaggregating proteins, also in an autonomous, DnaK-independent fashion. Unfolded proteins bind initially to DnaJ; upon interaction with the DnaJ-bound protein, DnaK hydrolyzes its bound ATP, resulting in the formation of a stable complex. GrpE releases ADP from DnaK; ATP binding to DnaK triggers the release of the substrate protein, thus completing the reaction cycle. Several rounds of ATP-dependent interactions between DnaJ, DnaK and GrpE are required for fully efficient folding. Also involved, together with DnaK and GrpE, in the DNA replication of plasmids through activation of initiation proteins. The sequence is that of Chaperone protein DnaJ from Shewanella piezotolerans (strain WP3 / JCM 13877).